The primary structure comprises 141 residues: Large ribosomal subunit protein bL17 (141 aa).

This sequence belongs to the bacterial ribosomal protein bL17 family. In terms of assembly, part of the 50S ribosomal subunit. Contacts protein L32.

The sequence is that of Large ribosomal subunit protein bL17 from Agrobacterium fabrum (strain C58 / ATCC 33970) (Agrobacterium tumefaciens (strain C58)).